Here is a 433-residue protein sequence, read N- to C-terminus: Enolase (433 aa).

Residue Q167 coordinates (2R)-2-phosphoglycerate. The Proton donor role is filled by E209. Mg(2+) contacts are provided by D246, E291, and D318. Residues K343, R372, S373, and K394 each coordinate (2R)-2-phosphoglycerate. The active-site Proton acceptor is the K343.

Belongs to the enolase family. As to quaternary structure, component of the RNA degradosome, a multiprotein complex involved in RNA processing and mRNA degradation. The cofactor is Mg(2+).

The protein localises to the cytoplasm. It is found in the secreted. It localises to the cell surface. The enzyme catalyses (2R)-2-phosphoglycerate = phosphoenolpyruvate + H2O. Its pathway is carbohydrate degradation; glycolysis; pyruvate from D-glyceraldehyde 3-phosphate: step 4/5. Its function is as follows. Catalyzes the reversible conversion of 2-phosphoglycerate (2-PG) into phosphoenolpyruvate (PEP). It is essential for the degradation of carbohydrates via glycolysis. This Tolumonas auensis (strain DSM 9187 / NBRC 110442 / TA 4) protein is Enolase.